A 316-amino-acid chain; its full sequence is Pantothenate kinase (316 aa).

ATP is bound at residue 95–102 (GSVAVGKS).

The protein belongs to the prokaryotic pantothenate kinase family.

The protein resides in the cytoplasm. It carries out the reaction (R)-pantothenate + ATP = (R)-4'-phosphopantothenate + ADP + H(+). It functions in the pathway cofactor biosynthesis; coenzyme A biosynthesis; CoA from (R)-pantothenate: step 1/5. In Shewanella pealeana (strain ATCC 700345 / ANG-SQ1), this protein is Pantothenate kinase.